The sequence spans 155 residues: Ribonuclease 8 (155 aa).

Residues Met1–Ala28 form the signal peptide. Cystine bridges form between Cys65–Cys119, Cys83–Cys134, and Cys90–Cys97. Substrate is bound by residues Lys66–Thr70 and Lys91. The active-site Proton donor is His150.

The protein belongs to the pancreatic ribonuclease family.

The protein localises to the secreted. In terms of biological role, has a low ribonuclease activity. This Saguinus oedipus (Cotton-top tamarin) protein is Ribonuclease 8 (RNASE8).